The primary structure comprises 542 residues: ATP synthase subunit beta (542 aa).

The span at 1–50 shows a compositional bias: low complexity; sequence MAKTPAKAPAAAAKPAAVKKPAAPKAAAAPKAAAVATPAAKKPAAPKAAP. The segment at 1 to 61 is disordered; sequence MAKTPAKAPA…SKVAGTREKP (61 aa). 216–223 is an ATP binding site; sequence GGAGVGKT.

The protein belongs to the ATPase alpha/beta chains family. As to quaternary structure, F-type ATPases have 2 components, CF(1) - the catalytic core - and CF(0) - the membrane proton channel. CF(1) has five subunits: alpha(3), beta(3), gamma(1), delta(1), epsilon(1). CF(0) has three main subunits: a(1), b(2) and c(9-12). The alpha and beta chains form an alternating ring which encloses part of the gamma chain. CF(1) is attached to CF(0) by a central stalk formed by the gamma and epsilon chains, while a peripheral stalk is formed by the delta and b chains.

The protein localises to the cell inner membrane. It catalyses the reaction ATP + H2O + 4 H(+)(in) = ADP + phosphate + 5 H(+)(out). Functionally, produces ATP from ADP in the presence of a proton gradient across the membrane. The catalytic sites are hosted primarily by the beta subunits. The sequence is that of ATP synthase subunit beta from Caulobacter sp. (strain K31).